The sequence spans 323 residues: Fos-related antigen 2 (323 aa).

Over residues 1-27 (MYQDYPGSFDTSSRGSSGSPGHPEPYS) the composition is skewed to low complexity. Residues 1–31 (MYQDYPGSFDTSSRGSSGSPGHPEPYSAGAA) are disordered. The 64-residue stretch at 124–187 (EEKRRIRRER…EKLEFMLVAH (64 aa)) folds into the bZIP domain. Positions 126-128 (KRR) are basic motif. The segment at 129–136 (IRRERNKL) is leucine-zipper. Disordered regions lie at residues 194–214 (SPEERRSPPTSSLQSVRTGAS) and 288–323 (ESPLSPSESCSKAHRRSSSSGDQSSDSLNSPTLLAL). Low complexity predominate over residues 305–317 (SSSGDQSSDSLNS).

The protein belongs to the bZIP family. Fos subfamily. Heterodimer with JUN.

Its subcellular location is the nucleus. In Gallus gallus (Chicken), this protein is Fos-related antigen 2 (FOSL2).